We begin with the raw amino-acid sequence, 93 residues long: uncharacterized protein (93 aa).

Residues 12-32 (VVGGLSFWTFSAGLIMIVNAL) form a helical membrane-spanning segment. The segment at 47 to 66 (TANANGSDDDNENKNNSYRS) is disordered.

Its subcellular location is the cell membrane. This is an uncharacterized protein from Mycoplasma genitalium (strain ATCC 33530 / DSM 19775 / NCTC 10195 / G37) (Mycoplasmoides genitalium).